The chain runs to 185 residues: MMTHLRPALASLLALSLLTGVAYPLALTGIAAVIAPDRAAGSLILREGQVVGSALIGQGFDGPGYLHPRPSASDWNAAGTSASNLGPTSAALLAEVQERQAAYEAQNGAPAPVDAVTASGSGLDPHVSPANARAQAARIARARGLDEAAVRRLIEAHVEPPLLGLWGQARVNVLAVNLALDAAGA.

Residues 14–34 (ALSLLTGVAYPLALTGIAAVI) traverse the membrane as a helical segment. The interval 105 to 128 (AQNGAPAPVDAVTASGSGLDPHVS) is disordered.

This sequence belongs to the KdpC family. As to quaternary structure, the system is composed of three essential subunits: KdpA, KdpB and KdpC.

The protein resides in the cell inner membrane. Functionally, part of the high-affinity ATP-driven potassium transport (or Kdp) system, which catalyzes the hydrolysis of ATP coupled with the electrogenic transport of potassium into the cytoplasm. This subunit acts as a catalytic chaperone that increases the ATP-binding affinity of the ATP-hydrolyzing subunit KdpB by the formation of a transient KdpB/KdpC/ATP ternary complex. The sequence is that of Potassium-transporting ATPase KdpC subunit from Cereibacter sphaeroides (strain ATCC 17029 / ATH 2.4.9) (Rhodobacter sphaeroides).